Here is a 109-residue protein sequence, read N- to C-terminus: ATP-dependent Clp protease adapter protein ClpS (109 aa).

The tract at residues 1–21 (MAERKQGGQNNGAGSSVITEV) is disordered.

It belongs to the ClpS family. As to quaternary structure, binds to the N-terminal domain of the chaperone ClpA.

In terms of biological role, involved in the modulation of the specificity of the ClpAP-mediated ATP-dependent protein degradation. This chain is ATP-dependent Clp protease adapter protein ClpS, found in Caulobacter sp. (strain K31).